A 497-amino-acid polypeptide reads, in one-letter code: Keratin, type II cytoskeletal 8 (497 aa).

The tract at residues 2 to 108 (TSYQRTVTVR…DPRIGQVRLE (107 aa)) is head. Positions 109-149 (EKEQIKTLNNQFAGFIDKVRYLEQQNKLLETKWQLLQNQTT) are coil 1A. The IF rod domain maps to 109 to 421 (EKEQIKTLNN…KLLEGEESRL (313 aa)). Residues 145-162 (QNQTTPSRSNLDSMFEAY) are linker 1. The coil 1B stretch occupies residues 163–254 (ISNLRRQLDT…QIYDEEIREL (92 aa)). The linker 12 stretch occupies residues 255-278 (QTQIQDTSVIVQMDNNRQLDLDNI). Residues 279–417 (IAEVRAQYED…ATYRKLLEGE (139 aa)) form a coil 2 region. A tail region spans residues 418 to 497 (ESRLASGIQA…VSERSNIVKE (80 aa)).

It belongs to the intermediate filament family. Heterotetramer of two type I and two type II keratins. Keratin-8 associates with keratin-18. As to expression, expressed in skin.

Its subcellular location is the cytoplasm. It localises to the nucleus. It is found in the nucleoplasm. The protein resides in the nucleus matrix. Together with KRT19, helps to link the contractile apparatus to dystrophin at the costameres of striated muscle. The polypeptide is Keratin, type II cytoskeletal 8 (Protopterus aethiopicus (Marbled lungfish)).